Reading from the N-terminus, the 659-residue chain is Threonine--tRNA ligase (659 aa).

The 61-residue stretch at 1–61 (MSAVPELRIT…ADGDVVEEIR (61 aa)) folds into the TGS domain. The segment at 260 to 555 (DHRKLGVELD…LLEHYAGAFP (296 aa)) is catalytic. The Zn(2+) site is built by Cys353, His404, and His532.

This sequence belongs to the class-II aminoacyl-tRNA synthetase family. As to quaternary structure, homodimer. Zn(2+) is required as a cofactor.

The protein resides in the cytoplasm. It catalyses the reaction tRNA(Thr) + L-threonine + ATP = L-threonyl-tRNA(Thr) + AMP + diphosphate + H(+). In terms of biological role, catalyzes the attachment of threonine to tRNA(Thr) in a two-step reaction: L-threonine is first activated by ATP to form Thr-AMP and then transferred to the acceptor end of tRNA(Thr). Also edits incorrectly charged L-seryl-tRNA(Thr). The sequence is that of Threonine--tRNA ligase from Thermobifida fusca (strain YX).